The primary structure comprises 435 residues: Cell adhesion molecule 2 (435 aa).

Residues 1–24 form the signal peptide; it reads MIWKRSAVLRFYSVCGLLLQGSQG. The Extracellular portion of the chain corresponds to 25-367; it reads QFPLTQNVTV…ALAGQNGPDH (343 aa). Residues 27 to 119 enclose the Ig-like V-type domain; it reads PLTQNVTVVE…PVKTSKAYLT (93 aa). 2 N-linked (GlcNAc...) asparagine glycosylation sites follow: Asn31 and Asn51. 3 disulfides stabilise this stretch: Cys44–Cys104, Cys146–Cys203, and Cys248–Cys296. 2 consecutive Ig-like C2-type domains span residues 127 to 219 and 227 to 312; these read PQIS…VAMQ and PSVK…YVLI. Asn291 carries an N-linked (GlcNAc...) asparagine glycan. The helical transmembrane segment at 368-388 threads the bilayer; that stretch reads ALIGGIVAVVVFVTLCSIFLL. Residues 389 to 435 lie on the Cytoplasmic side of the membrane; sequence GRYLARHKGTYLTNEAKGAEDAPDADTAIINAEGSQVNAEEKKEYFI. The residue at position 423 (Ser423) is a Phosphoserine.

This sequence belongs to the nectin family.

It localises to the cell membrane. The protein localises to the synapse. It is found in the cell projection. The protein resides in the axon. Functionally, adhesion molecule that engages in homo- and heterophilic interactions with the other nectin-like family members, leading to cell aggregation. Important for synapse organization, providing regulated trans-synaptic adhesion. Preferentially binds to oligodendrocytes. (Microbial infection) Induces cell fusion in neuron infected by a neuropathogenic strain of measles. Interacts with measles hemagglutinin to trigger hyperfusogenic F-mediated membrane fusion and presumably transsynaptic cell-to-cell transmission of the virus. The sequence is that of Cell adhesion molecule 2 (CADM2) from Homo sapiens (Human).